Here is a 986-residue protein sequence, read N- to C-terminus: Translation initiation factor IF-2 (986 aa).

Basic and acidic residues predominate over residues 75-94 (KRLSRLEEQSRKTYEKEQHL). Disordered regions lie at residues 75–105 (KRLS…APPL), 127–148 (PPSK…PDAP), 185–258 (SEVP…VSFD), and 277–394 (GRHK…HEED). Low complexity-rich tracts occupy residues 185–210 (SEVP…ESPL) and 218–235 (SEPQ…LPEI). Over residues 292 to 313 (DALKDEFEPKPAEESRVEEKVV) the composition is skewed to basic and acidic residues. A compositionally biased stretch (low complexity) spans 315–338 (AKKPPVKAAADVKPKPVVADSSSS). Over residues 339–348 (AKKKGKKKKK) the composition is skewed to basic residues. One can recognise a tr-type G domain in the interval 483–653 (TRPPVVTIMG…LTEAEMRELR (171 aa)). The tract at residues 492-499 (GHVDHGKT) is G1. Residue 492-499 (GHVDHGKT) participates in GTP binding. Residues 517–521 (GITQH) are G2. The G3 stretch occupies residues 539-542 (DTPG). GTP contacts are provided by residues 539–543 (DTPGH) and 593–596 (NKID). The G4 stretch occupies residues 593-596 (NKID). Residues 629–631 (SAK) form a G5 region.

Belongs to the TRAFAC class translation factor GTPase superfamily. Classic translation factor GTPase family. IF-2 subfamily.

It localises to the cytoplasm. Its function is as follows. One of the essential components for the initiation of protein synthesis. Protects formylmethionyl-tRNA from spontaneous hydrolysis and promotes its binding to the 30S ribosomal subunits. Also involved in the hydrolysis of GTP during the formation of the 70S ribosomal complex. In Pelodictyon phaeoclathratiforme (strain DSM 5477 / BU-1), this protein is Translation initiation factor IF-2.